The chain runs to 236 residues: Ubiquinone biosynthesis O-methyltransferase (236 aa).

Arg36, Gly56, Asp77, and Met125 together coordinate S-adenosyl-L-methionine.

The protein belongs to the methyltransferase superfamily. UbiG/COQ3 family.

The enzyme catalyses a 3-demethylubiquinol + S-adenosyl-L-methionine = a ubiquinol + S-adenosyl-L-homocysteine + H(+). The catalysed reaction is a 3-(all-trans-polyprenyl)benzene-1,2-diol + S-adenosyl-L-methionine = a 2-methoxy-6-(all-trans-polyprenyl)phenol + S-adenosyl-L-homocysteine + H(+). It participates in cofactor biosynthesis; ubiquinone biosynthesis. O-methyltransferase that catalyzes the 2 O-methylation steps in the ubiquinone biosynthetic pathway. In Glaesserella parasuis serovar 5 (strain SH0165) (Haemophilus parasuis), this protein is Ubiquinone biosynthesis O-methyltransferase.